Here is a 478-residue protein sequence, read N- to C-terminus: UDP-glycosyltransferase 71B5 (478 aa).

UDP-alpha-D-glucose contacts are provided by residues Ser-280, 347–349 (APQ), 364–372 (HCGWNSILE), and 386–389 (YAEQ).

The protein belongs to the UDP-glycosyltransferase family.

Functionally, possesses low quercetin 3-O-glucosyltransferase activity in vitro. This Arabidopsis thaliana (Mouse-ear cress) protein is UDP-glycosyltransferase 71B5 (UGT71B5).